Consider the following 250-residue polypeptide: Ubiquinone/menaquinone biosynthesis C-methyltransferase UbiE (250 aa).

S-adenosyl-L-methionine contacts are provided by residues Ser73, Asp94, and 122–123; that span reads NA.

The protein belongs to the class I-like SAM-binding methyltransferase superfamily. MenG/UbiE family.

It catalyses the reaction a 2-demethylmenaquinol + S-adenosyl-L-methionine = a menaquinol + S-adenosyl-L-homocysteine + H(+). The enzyme catalyses a 2-methoxy-6-(all-trans-polyprenyl)benzene-1,4-diol + S-adenosyl-L-methionine = a 5-methoxy-2-methyl-3-(all-trans-polyprenyl)benzene-1,4-diol + S-adenosyl-L-homocysteine + H(+). It participates in quinol/quinone metabolism; menaquinone biosynthesis; menaquinol from 1,4-dihydroxy-2-naphthoate: step 2/2. Its pathway is cofactor biosynthesis; ubiquinone biosynthesis. In terms of biological role, methyltransferase required for the conversion of demethylmenaquinol (DMKH2) to menaquinol (MKH2) and the conversion of 2-polyprenyl-6-methoxy-1,4-benzoquinol (DDMQH2) to 2-polyprenyl-3-methyl-6-methoxy-1,4-benzoquinol (DMQH2). The protein is Ubiquinone/menaquinone biosynthesis C-methyltransferase UbiE of Legionella pneumophila subsp. pneumophila (strain Philadelphia 1 / ATCC 33152 / DSM 7513).